The primary structure comprises 355 residues: Mannonate dehydratase (355 aa).

This sequence belongs to the mannonate dehydratase family. Fe(2+) is required as a cofactor. The cofactor is Mn(2+).

It catalyses the reaction D-mannonate = 2-dehydro-3-deoxy-D-gluconate + H2O. The protein operates within carbohydrate metabolism; pentose and glucuronate interconversion. Catalyzes the dehydration of D-mannonate. This Brachyspira hyodysenteriae (strain ATCC 49526 / WA1) protein is Mannonate dehydratase.